The following is a 285-amino-acid chain: MTKKIILPSPAKLNLFLYITNKRVDGYHELQTLFQFLDFGDDISLEVNESGEIELLNAIEGVAKEQNLIYRAAKLLQNHTACSKGAKIGVTKRLPMGGGVGGGSSNAATVLVGLNHFWQTGLSLEQLAELGLSLGADVPIFVRGFAAFAEGVGEKLVACQPRESWYVVLKPNVSISTAAVFQDPNLPRNTPKRTLSRLLSEEWTNDCEKVVRDHYFEVEDLIAELLQYATFRLTGTGACIFAEFESEAEAKAVFAHKPHNIFGFIAKGQNRSPLHQMLNLTTFPQ.

Residue Lys-12 is part of the active site. 95–105 (PMGGGVGGGSS) contributes to the ATP binding site. Residue Asp-137 is part of the active site.

It belongs to the GHMP kinase family. IspE subfamily.

The enzyme catalyses 4-CDP-2-C-methyl-D-erythritol + ATP = 4-CDP-2-C-methyl-D-erythritol 2-phosphate + ADP + H(+). Its pathway is isoprenoid biosynthesis; isopentenyl diphosphate biosynthesis via DXP pathway; isopentenyl diphosphate from 1-deoxy-D-xylulose 5-phosphate: step 3/6. Functionally, catalyzes the phosphorylation of the position 2 hydroxy group of 4-diphosphocytidyl-2C-methyl-D-erythritol. This Actinobacillus pleuropneumoniae serotype 7 (strain AP76) protein is 4-diphosphocytidyl-2-C-methyl-D-erythritol kinase.